A 138-amino-acid polypeptide reads, in one-letter code: Putative pre-16S rRNA nuclease (138 aa).

This sequence belongs to the YqgF nuclease family.

The protein localises to the cytoplasm. Could be a nuclease involved in processing of the 5'-end of pre-16S rRNA. The protein is Putative pre-16S rRNA nuclease of Salmonella schwarzengrund (strain CVM19633).